A 533-amino-acid polypeptide reads, in one-letter code: Tryptophan N-monooxygenase CYP79A68 (533 aa).

Residues 12–32 (VTPPISLSLAFIIFMFLVKFI) form a helical membrane-spanning segment. A glycan (N-linked (GlcNAc...) asparagine) is linked at asparagine 209. Heme is bound at residue cysteine 471.

The protein belongs to the cytochrome P450 family. It depends on heme as a cofactor. In terms of tissue distribution, confined to buds.

Its subcellular location is the membrane. It catalyses the reaction L-tryptophan + 2 reduced [NADPH--hemoprotein reductase] + 2 O2 = (E)-(indol-3-yl)acetaldehyde oxime + 2 oxidized [NADPH--hemoprotein reductase] + CO2 + 3 H2O + 2 H(+). Its function is as follows. Catalyzes with low efficiency E and Z isomers of indole-3-acetaldoxime from tryptophan (Trp). This Prunus mume (Japanese apricot) protein is Tryptophan N-monooxygenase CYP79A68.